Reading from the N-terminus, the 415-residue chain is Imidazolonepropionase (415 aa).

Fe(3+) is bound by residues His-74 and His-76. Positions 74 and 76 each coordinate Zn(2+). Residues Arg-83, Tyr-146, and His-179 each contribute to the 4-imidazolone-5-propanoate site. Residue Tyr-146 coordinates N-formimidoyl-L-glutamate. His-244 is a Fe(3+) binding site. His-244 serves as a coordination point for Zn(2+). Residue Gln-247 participates in 4-imidazolone-5-propanoate binding. Fe(3+) is bound at residue Asp-319. Asp-319 is a binding site for Zn(2+). N-formimidoyl-L-glutamate is bound by residues Asn-321 and Gly-323. Residue Thr-324 coordinates 4-imidazolone-5-propanoate.

This sequence belongs to the metallo-dependent hydrolases superfamily. HutI family. Zn(2+) is required as a cofactor. It depends on Fe(3+) as a cofactor.

The protein localises to the cytoplasm. The catalysed reaction is 4-imidazolone-5-propanoate + H2O = N-formimidoyl-L-glutamate. The protein operates within amino-acid degradation; L-histidine degradation into L-glutamate; N-formimidoyl-L-glutamate from L-histidine: step 3/3. Its function is as follows. Catalyzes the hydrolytic cleavage of the carbon-nitrogen bond in imidazolone-5-propanoate to yield N-formimidoyl-L-glutamate. It is the third step in the universal histidine degradation pathway. The polypeptide is Imidazolonepropionase (Cupriavidus metallidurans (strain ATCC 43123 / DSM 2839 / NBRC 102507 / CH34) (Ralstonia metallidurans)).